Consider the following 546-residue polypeptide: Chaperonin GroEL 1 (546 aa).

Residues 30–33 (TLGP), Lys-51, 87–91 (DGTTT), Gly-415, 479–481 (NAA), and Asp-495 each bind ATP.

Belongs to the chaperonin (HSP60) family. Forms a cylinder of 14 subunits composed of two heptameric rings stacked back-to-back. Interacts with the co-chaperonin GroES.

The protein localises to the cytoplasm. The catalysed reaction is ATP + H2O + a folded polypeptide = ADP + phosphate + an unfolded polypeptide.. Its function is as follows. Together with its co-chaperonin GroES, plays an essential role in assisting protein folding. The GroEL-GroES system forms a nano-cage that allows encapsulation of the non-native substrate proteins and provides a physical environment optimized to promote and accelerate protein folding. The polypeptide is Chaperonin GroEL 1 (Paraburkholderia xenovorans (strain LB400)).